The chain runs to 719 residues: Protein lin-15A (719 aa).

Disordered stretches follow at residues 179–199, 419–464, 559–626, and 684–719; these read FSHF…EGSQ, YRDH…SISW, LTTA…PTKT, and AKQV…EPIF. Low complexity predominate over residues 570 to 579; the sequence is STSTDSSSSS. The span at 604–617 shows a compositional bias: polar residues; it reads LLQNKPTHVESSSP. Over residues 693–719 the composition is skewed to basic and acidic residues; sequence EPKHIPPTHMEKKPEELLMDPKPEPIF.

Its subcellular location is the nucleus. Synthetic multivulva (synMuv) class A protein. SynMuv proteins are required to repress the induction of vulval development. Acts redundantly with SynMuv class B protein lin-15B, and lin-35 to negatively regulate vulval development, most likely through antagonization of the Ras-signaling pathway. May also negatively regulate vulval development in association with other SynMuv class B proteins such as dpl-1 and efl-1. Regulates let-23 basal activity. Required for the correct expression and/or stability of lin-56. The protein is Protein lin-15A of Caenorhabditis elegans.